Reading from the N-terminus, the 194-residue chain is Glycerol-3-phosphate acyltransferase (194 aa).

The next 5 membrane-spanning stretches (helical) occupy residues 2 to 22 (LIEI…TGLL), 51 to 71 (SVGI…VLAA), 80 to 100 (WIAL…FLGF), 112 to 132 (VFLG…VAVV), and 155 to 175 (FLSG…LVIW).

This sequence belongs to the PlsY family. In terms of assembly, probably interacts with PlsX.

Its subcellular location is the cell inner membrane. It catalyses the reaction an acyl phosphate + sn-glycerol 3-phosphate = a 1-acyl-sn-glycero-3-phosphate + phosphate. Its pathway is lipid metabolism; phospholipid metabolism. In terms of biological role, catalyzes the transfer of an acyl group from acyl-phosphate (acyl-PO(4)) to glycerol-3-phosphate (G3P) to form lysophosphatidic acid (LPA). This enzyme utilizes acyl-phosphate as fatty acyl donor, but not acyl-CoA or acyl-ACP. The sequence is that of Glycerol-3-phosphate acyltransferase from Geobacter metallireducens (strain ATCC 53774 / DSM 7210 / GS-15).